Here is a 301-residue protein sequence, read N- to C-terminus: D-alanine--D-alanine ligase (301 aa).

The 194-residue stretch at lysine 102–glutamate 295 folds into the ATP-grasp domain. Position 128 to 181 (proline 128 to threonine 181) interacts with ATP. Residues aspartate 248, glutamate 262, and asparagine 264 each coordinate Mg(2+).

Belongs to the D-alanine--D-alanine ligase family. Mg(2+) serves as cofactor. Requires Mn(2+) as cofactor.

It is found in the cytoplasm. It carries out the reaction 2 D-alanine + ATP = D-alanyl-D-alanine + ADP + phosphate + H(+). The protein operates within cell wall biogenesis; peptidoglycan biosynthesis. Cell wall formation. This chain is D-alanine--D-alanine ligase, found in Acidiphilium cryptum (strain JF-5).